The following is a 224-amino-acid chain: Holliday junction branch migration complex subunit RuvA (224 aa).

Positions 1–67 are domain I; sequence MISWLKGEKV…EDGTSLYGFI (67 aa). A domain II region spans residues 68-146; it reads EVNQRDLFRE…RFTDNDKTIH (79 aa). The flexible linker stretch occupies residues 147–157; that stretch reads ENKNDIEANQF. A domain III region spans residues 157-224; the sequence is FSKYIDEIYL…ILMKLSEKST (68 aa).

The protein belongs to the RuvA family. In terms of assembly, homotetramer. Forms an RuvA(8)-RuvB(12)-Holliday junction (HJ) complex. HJ DNA is sandwiched between 2 RuvA tetramers; dsDNA enters through RuvA and exits via RuvB. An RuvB hexamer assembles on each DNA strand where it exits the tetramer. Each RuvB hexamer is contacted by two RuvA subunits (via domain III) on 2 adjacent RuvB subunits; this complex drives branch migration. In the full resolvosome a probable DNA-RuvA(4)-RuvB(12)-RuvC(2) complex forms which resolves the HJ.

Its subcellular location is the cytoplasm. Functionally, the RuvA-RuvB-RuvC complex processes Holliday junction (HJ) DNA during genetic recombination and DNA repair, while the RuvA-RuvB complex plays an important role in the rescue of blocked DNA replication forks via replication fork reversal (RFR). RuvA specifically binds to HJ cruciform DNA, conferring on it an open structure. The RuvB hexamer acts as an ATP-dependent pump, pulling dsDNA into and through the RuvAB complex. HJ branch migration allows RuvC to scan DNA until it finds its consensus sequence, where it cleaves and resolves the cruciform DNA. The sequence is that of Holliday junction branch migration complex subunit RuvA from Prochlorococcus marinus (strain NATL2A).